A 664-amino-acid polypeptide reads, in one-letter code: Intraflagellar transport protein 70B (664 aa).

TPR repeat units follow at residues 11 to 44, 45 to 78, 153 to 186, 188 to 220, 385 to 418, 423 to 456, and 458 to 491; these read DGEF…SPRS, RAGL…HPEL, LDGQ…SGYR, DLSY…GIRQ, LTEQ…YEDT, IPVL…CNDH, and VWKL…HYDN. A coiled-coil region spans residues 509-532; that stretch reads MISQNEEAEELMRKIGKEEEQLSY. A TPR 8 repeat occupies 543–576; it reads CIVNLVIGTLYCAKGNYDFGISRVIKSLEPCNKK.

Belongs to the TTC30/dfy-1/fleer family. In terms of assembly, interacts with the IFT B complex components IFT27, IFT46, IFT74, IFT52, IFT57, IFT80, IFT81 and IFT88. Interacts with KIF17.

It localises to the cell projection. The protein localises to the cilium. Its function is as follows. Required for polyglutamylation of axonemal tubulin. Plays a role in anterograde intraflagellar transport (IFT), the process by which cilia precursors are transported from the base of the cilium to the site of their incorporation at the tip. The sequence is that of Intraflagellar transport protein 70B (IFT70B) from Bos taurus (Bovine).